The following is a 935-amino-acid chain: Protein translocase subunit SecA (935 aa).

ATP contacts are provided by residues Gln86, 104–108, and Asp494; that span reads GEGKT. The segment at 879 to 935 is disordered; the sequence is EQAATARAQQHSSAAVAAPEQGATQRGAFGQRVSAADDAAPANRAERRAQKKPTKRH.

This sequence belongs to the SecA family. As to quaternary structure, monomer and homodimer. Part of the essential Sec protein translocation apparatus which comprises SecA, SecYEG and auxiliary proteins SecDF. Other proteins may also be involved.

The protein localises to the cell membrane. Its subcellular location is the cytoplasm. The catalysed reaction is ATP + H2O + cellular proteinSide 1 = ADP + phosphate + cellular proteinSide 2.. Functionally, part of the Sec protein translocase complex. Interacts with the SecYEG preprotein conducting channel. Has a central role in coupling the hydrolysis of ATP to the transfer of proteins into and across the cell membrane, serving as an ATP-driven molecular motor driving the stepwise translocation of polypeptide chains across the membrane. This Leifsonia xyli subsp. xyli (strain CTCB07) protein is Protein translocase subunit SecA.